A 305-amino-acid polypeptide reads, in one-letter code: Transcription factor MYB87 (305 aa).

HTH myb-type domains lie at 9-66 (KMAV…RPNL) and 67-117 (KHGG…KKKL). 2 consecutive DNA-binding regions (H-T-H motif) follow at residues 38–62 (WISLPQRIGIKRCGKSCRLRWLNYL) and 90–113 (WSIIASQLPGRTDNDIKNYWNTRL).

Expressed in roots, leaves, internodes, shoot tips and flowers.

Its subcellular location is the nucleus. Transcription factor that functions as a regulator of genes affecting cell wall organization and remodeling. Activates genes related to the primary cell wall and represses genes related to the secondary cell wall and expansins. Required for the regulation of longitudinal cell growth in stems, leaves, petioles, roots, flowers and siliques. The polypeptide is Transcription factor MYB87 (Arabidopsis thaliana (Mouse-ear cress)).